Here is a 180-residue protein sequence, read N- to C-terminus: Bifunctional protein PyrR (180 aa).

Positions 101–113 (LIVVDDVLFTGRT) match the PRPP-binding motif.

Belongs to the purine/pyrimidine phosphoribosyltransferase family. PyrR subfamily. In terms of assembly, homodimer and homohexamer; in equilibrium.

It carries out the reaction UMP + diphosphate = 5-phospho-alpha-D-ribose 1-diphosphate + uracil. Regulates transcriptional attenuation of the pyrimidine nucleotide (pyr) operon by binding in a uridine-dependent manner to specific sites on pyr mRNA. This disrupts an antiterminator hairpin in the RNA and favors formation of a downstream transcription terminator, leading to a reduced expression of downstream genes. In terms of biological role, also displays a weak uracil phosphoribosyltransferase activity which is not physiologically significant. This chain is Bifunctional protein PyrR, found in Bacillus pumilus (strain SAFR-032).